A 319-amino-acid chain; its full sequence is Pantothenate kinase (319 aa).

97-104 (GSVAVGKS) contributes to the ATP binding site.

This sequence belongs to the prokaryotic pantothenate kinase family.

It is found in the cytoplasm. The enzyme catalyses (R)-pantothenate + ATP = (R)-4'-phosphopantothenate + ADP + H(+). It functions in the pathway cofactor biosynthesis; coenzyme A biosynthesis; CoA from (R)-pantothenate: step 1/5. The protein is Pantothenate kinase of Mesorhizobium japonicum (strain LMG 29417 / CECT 9101 / MAFF 303099) (Mesorhizobium loti (strain MAFF 303099)).